The chain runs to 134 residues: Complexin-2 (134 aa).

A disordered region spans residues 1–114 (MDFVMKQALG…CGDEEEEEEE (114 aa)). Residues 15-85 (DMGKMLGGEE…EEKEAEEKAA (71 aa)) are compositionally biased toward basic and acidic residues. Residues 28–84 (PDAQKKEEERQEALRQQEEERKAKHARMEAEREKVRQQIRDKYGLKKKEEKEAEEKA) are a coiled coil. Residues 41–97 (LRQQEEERKAKHARMEAEREKVRQQIRDKYGLKKKEEKEAEEKAALEQPCEGSLTRP) form an interaction with the SNARE complex region. Residue Ser-93 is modified to Phosphoserine.

It belongs to the complexin/synaphin family. Binds to the SNARE core complex containing SNAP25, VAMP2 and STX1A. As to expression, nervous system. Also present in adrenal chromaffin cells (at protein level).

It is found in the cytoplasm. The protein resides in the cytosol. Its subcellular location is the presynapse. It localises to the nucleus. The protein localises to the perikaryon. Its function is as follows. Negatively regulates the formation of synaptic vesicle clustering at active zone to the presynaptic membrane in postmitotic neurons. Positively regulates a late step in exocytosis of various cytoplasmic vesicles, such as synaptic vesicles and other secretory vesicles. Also involved in mast cell exocytosis. This is Complexin-2 (CPLX2) from Bos taurus (Bovine).